Consider the following 162-residue polypeptide: Putative pre-16S rRNA nuclease (162 aa).

The protein belongs to the YqgF nuclease family.

The protein localises to the cytoplasm. Its function is as follows. Could be a nuclease involved in processing of the 5'-end of pre-16S rRNA. The polypeptide is Putative pre-16S rRNA nuclease (Brucella melitensis biotype 2 (strain ATCC 23457)).